The primary structure comprises 503 residues: Aspartyl/glutamyl-tRNA(Asn/Gln) amidotransferase subunit B (503 aa).

This sequence belongs to the GatB/GatE family. GatB subfamily. As to quaternary structure, heterotrimer of A, B and C subunits.

It carries out the reaction L-glutamyl-tRNA(Gln) + L-glutamine + ATP + H2O = L-glutaminyl-tRNA(Gln) + L-glutamate + ADP + phosphate + H(+). It catalyses the reaction L-aspartyl-tRNA(Asn) + L-glutamine + ATP + H2O = L-asparaginyl-tRNA(Asn) + L-glutamate + ADP + phosphate + 2 H(+). Allows the formation of correctly charged Asn-tRNA(Asn) or Gln-tRNA(Gln) through the transamidation of misacylated Asp-tRNA(Asn) or Glu-tRNA(Gln) in organisms which lack either or both of asparaginyl-tRNA or glutaminyl-tRNA synthetases. The reaction takes place in the presence of glutamine and ATP through an activated phospho-Asp-tRNA(Asn) or phospho-Glu-tRNA(Gln). The chain is Aspartyl/glutamyl-tRNA(Asn/Gln) amidotransferase subunit B from Rhodococcus erythropolis (strain PR4 / NBRC 100887).